The following is a 156-amino-acid chain: Putative HTH-type transcriptional regulator BadM (156 aa).

One can recognise an HTH rrf2-type domain in the interval 4–130 (RLQKSTMCGL…RSVSITSLLK (127 aa)). The disordered stretch occupies residues 136-156 (RRKTERGPNGASARHSSAGRA). Over residues 145–156 (GASARHSSAGRA) the composition is skewed to low complexity.

This Rhodopseudomonas palustris (strain ATCC BAA-98 / CGA009) protein is Putative HTH-type transcriptional regulator BadM (badM).